We begin with the raw amino-acid sequence, 142 residues long: MAKKIDGYIKLQVPAGKANPSPPIGPALGQRGVNIMAFCKEFNAATQKVEPGLPIPVVITVYNDKSFTFIMKTPPASILLKKAAGIQKGSSVPNKTKVGKLTRAQLEEIATTKEPDLTGADLDARVRTIAGSARSMGLEVEL.

Belongs to the universal ribosomal protein uL11 family. Part of the ribosomal stalk of the 50S ribosomal subunit. Interacts with L10 and the large rRNA to form the base of the stalk. L10 forms an elongated spine to which L12 dimers bind in a sequential fashion forming a multimeric L10(L12)X complex. Post-translationally, one or more lysine residues are methylated.

Functionally, forms part of the ribosomal stalk which helps the ribosome interact with GTP-bound translation factors. The chain is Large ribosomal subunit protein uL11 from Acinetobacter baumannii (strain AB307-0294).